We begin with the raw amino-acid sequence, 166 residues long: uncharacterized protein (166 aa).

Composition is skewed to basic and acidic residues over residues 1 to 13 (MAEV…EHNS), 21 to 112 (KAND…KTKE), and 119 to 137 (DNVE…KEGG). Residues 1–144 (MAEVSKKRCE…EGGSKAWNKT (144 aa)) are disordered. 8 repeat units span residues 31-41 (DKTKETAGSAK), 42-52 (DKTKETAGSAK), 53-63 (DKTKETAESAK), 64-74 (DKTKETAGSAK), 75-85 (DKTKETAESAK), 86-96 (DKTKETAGSAK), 97-107 (DKTKETAESAK), and 108-118 (DKTKETAGNVR). The tract at residues 31–118 (DKTKETAGSA…KTKETAGNVR (88 aa)) is 8 X 11 AA approximate tandem repeats of D-K-T-K-E-T-A-G/E-S-A-K.

This sequence belongs to the LEA type 1 family.

This is an uncharacterized protein from Encephalitozoon cuniculi (strain GB-M1) (Microsporidian parasite).